Reading from the N-terminus, the 206-residue chain is Protein GrpE (206 aa).

Residues 1–10 (MTDPDLHQND) are compositionally biased toward basic and acidic residues. A disordered region spans residues 1–38 (MTDPDLHQNDPENPAQASEPVVSKPYIMPDDPETGSAE).

The protein belongs to the GrpE family. As to quaternary structure, homodimer.

Its subcellular location is the cytoplasm. Its function is as follows. Participates actively in the response to hyperosmotic and heat shock by preventing the aggregation of stress-denatured proteins, in association with DnaK and GrpE. It is the nucleotide exchange factor for DnaK and may function as a thermosensor. Unfolded proteins bind initially to DnaJ; upon interaction with the DnaJ-bound protein, DnaK hydrolyzes its bound ATP, resulting in the formation of a stable complex. GrpE releases ADP from DnaK; ATP binding to DnaK triggers the release of the substrate protein, thus completing the reaction cycle. Several rounds of ATP-dependent interactions between DnaJ, DnaK and GrpE are required for fully efficient folding. This is Protein GrpE from Bradyrhizobium sp. (strain ORS 278).